The following is a 508-amino-acid chain: Photosystem II CP47 reaction center protein (508 aa).

6 helical membrane passes run 21-36, 101-115, 140-156, 203-218, 237-252, and 457-472; these read SVHIMHTALVSGWAGS, IVFSGLCFLAAIWHW, GIHLFLSGVACFGFGAF, IAAGTLGILAGLFHLS, VLSSSIAAVFFAAFVV, and SFALLFFFGHIWHGAR.

Belongs to the PsbB/PsbC family. PsbB subfamily. In terms of assembly, PSII is composed of 1 copy each of membrane proteins PsbA, PsbB, PsbC, PsbD, PsbE, PsbF, PsbH, PsbI, PsbJ, PsbK, PsbL, PsbM, PsbT, PsbX, PsbY, PsbZ, Psb30/Ycf12, at least 3 peripheral proteins of the oxygen-evolving complex and a large number of cofactors. It forms dimeric complexes. Requires Binds multiple chlorophylls. PSII binds additional chlorophylls, carotenoids and specific lipids. as cofactor.

The protein resides in the plastid. The protein localises to the chloroplast thylakoid membrane. One of the components of the core complex of photosystem II (PSII). It binds chlorophyll and helps catalyze the primary light-induced photochemical processes of PSII. PSII is a light-driven water:plastoquinone oxidoreductase, using light energy to abstract electrons from H(2)O, generating O(2) and a proton gradient subsequently used for ATP formation. This is Photosystem II CP47 reaction center protein from Platanus occidentalis (Sycamore).